Here is a 65-residue protein sequence, read N- to C-terminus: EHGYLLNKYTGCKVWCVINNEECGYLCNKRRGGYYGYCYFWKLACYCQGARKSELWNYKTNKCDL.

Residues Glu1–Asp64 enclose the LCN-type CS-alpha/beta domain. Intrachain disulfides connect Cys12/Cys63, Cys16/Cys38, Cys23/Cys45, and Cys27/Cys47.

The protein belongs to the long (4 C-C) scorpion toxin superfamily. Sodium channel inhibitor family. Expressed by the venom gland.

Its subcellular location is the secreted. Functionally, has a toxic effect on insects and mammals and is capable of competing with anti-insect scorpion toxins for binding to the sodium channel (Nav) of insects. It also modulates the binding of alpha-type and beta-type anti-mammal scorpion toxins to the mammal sodium channel. It may act on both site 3 and site 4 of voltage-gated sodium channels. This Androctonus australis (Sahara scorpion) protein is Toxin AaHIT4.